A 175-amino-acid polypeptide reads, in one-letter code: Large ribosomal subunit protein uL10 (175 aa).

The protein belongs to the universal ribosomal protein uL10 family. As to quaternary structure, part of the ribosomal stalk of the 50S ribosomal subunit. The N-terminus interacts with L11 and the large rRNA to form the base of the stalk. The C-terminus forms an elongated spine to which L12 dimers bind in a sequential fashion forming a multimeric L10(L12)X complex.

Functionally, forms part of the ribosomal stalk, playing a central role in the interaction of the ribosome with GTP-bound translation factors. The sequence is that of Large ribosomal subunit protein uL10 from Prochlorococcus marinus (strain AS9601).